The primary structure comprises 211 residues: tRNA (guanine-N(7)-)-methyltransferase (211 aa).

Positions 44, 69, 96, and 118 each coordinate S-adenosyl-L-methionine. Residue Asp118 is part of the active site. Lys122 lines the substrate pocket. The tract at residues 124–129 (RHEKRR) is interaction with RNA. Substrate is bound by residues Asp154 and 191-194 (TEYE).

It belongs to the class I-like SAM-binding methyltransferase superfamily. TrmB family.

It carries out the reaction guanosine(46) in tRNA + S-adenosyl-L-methionine = N(7)-methylguanosine(46) in tRNA + S-adenosyl-L-homocysteine. It participates in tRNA modification; N(7)-methylguanine-tRNA biosynthesis. Functionally, catalyzes the formation of N(7)-methylguanine at position 46 (m7G46) in tRNA. The protein is tRNA (guanine-N(7)-)-methyltransferase of Streptococcus equi subsp. equi (strain 4047).